The sequence spans 355 residues: uncharacterized protein (355 aa).

It is found in the cytoplasm. This is an uncharacterized protein from Saccharomyces cerevisiae (strain ATCC 204508 / S288c) (Baker's yeast).